Reading from the N-terminus, the 362-residue chain is tRNA-specific 2-thiouridylase MnmA (362 aa).

ATP is bound by residues 13-20 and M39; that span reads GLSGGVDS. Positions 99–101 are interaction with target base in tRNA; it reads NPD. Catalysis depends on C104, which acts as the Nucleophile. Cysteines 104 and 200 form a disulfide. G128 contributes to the ATP binding site. Residues 150–152 form an interaction with tRNA region; the sequence is KDQ. C200 acts as the Cysteine persulfide intermediate in catalysis. The tract at residues 310 to 311 is interaction with tRNA; sequence RY.

Belongs to the MnmA/TRMU family.

Its subcellular location is the cytoplasm. The enzyme catalyses S-sulfanyl-L-cysteinyl-[protein] + uridine(34) in tRNA + AH2 + ATP = 2-thiouridine(34) in tRNA + L-cysteinyl-[protein] + A + AMP + diphosphate + H(+). In terms of biological role, catalyzes the 2-thiolation of uridine at the wobble position (U34) of tRNA, leading to the formation of s(2)U34. In Vesicomyosocius okutanii subsp. Calyptogena okutanii (strain HA), this protein is tRNA-specific 2-thiouridylase MnmA.